A 365-amino-acid chain; its full sequence is Putative F-box/kelch-repeat protein At3g16880 (365 aa).

The region spanning 1 to 47 (MTKMSKLPNDLLEEILSRSPLYSMRAIRLTCKKWNTLAKEESFTKKQ) is the F-box domain. Kelch repeat units follow at residues 98 to 149 (RVYH…TKKS) and 155 to 205 (ILSS…VKGN).

This Arabidopsis thaliana (Mouse-ear cress) protein is Putative F-box/kelch-repeat protein At3g16880.